Here is a 355-residue protein sequence, read N- to C-terminus: Ataxin-3-like protein (355 aa).

One can recognise a Josephin domain in the interval 1 to 180; that stretch reads MDFIFHEKQE…DCEADQLLQI (180 aa). Cys-14 (nucleophile) is an active-site residue. His-119 acts as the Proton acceptor in catalysis. Asn-134 is an active-site residue. 2 disordered regions span residues 209–230 and 253–331; these read LEKVSEESDESGTSDQDEEDFQ and LSMQ…DISE. Residues 215-228 show a composition bias toward acidic residues; sequence ESDESGTSDQDEED. UIM domains lie at 224 to 243 and 244 to 258; these read QDEEDFQRALELSRQETNRE and DEHLRSTIELSMQGS. Positions 253–276 are enriched in polar residues; it reads LSMQGSSGNTSQDLPKTSCVTPAS. A compositionally biased stretch (basic and acidic residues) spans 278 to 293; the sequence is QPKKIKEDYFEKHQQE.

Widely expressed.

Its subcellular location is the nucleus. It catalyses the reaction Thiol-dependent hydrolysis of ester, thioester, amide, peptide and isopeptide bonds formed by the C-terminal Gly of ubiquitin (a 76-residue protein attached to proteins as an intracellular targeting signal).. Functionally, deubiquitinating enzyme that cleaves both 'Lys-48'-linked and 'Lys-63'-linked poly-ubiquitin chains (in vitro). Acts as a deubiquitinating enzyme for the transcription factor KLF5, playing a role in the regulation of KLF5 stability. This is Ataxin-3-like protein from Homo sapiens (Human).